The primary structure comprises 150 residues: 3-hydroxyacyl-[acyl-carrier-protein] dehydratase FabZ (150 aa).

H51 is an active-site residue.

This sequence belongs to the thioester dehydratase family. FabZ subfamily.

Its subcellular location is the cytoplasm. The enzyme catalyses a (3R)-hydroxyacyl-[ACP] = a (2E)-enoyl-[ACP] + H2O. In terms of biological role, involved in unsaturated fatty acids biosynthesis. Catalyzes the dehydration of short chain beta-hydroxyacyl-ACPs and long chain saturated and unsaturated beta-hydroxyacyl-ACPs. This is 3-hydroxyacyl-[acyl-carrier-protein] dehydratase FabZ from Geobacter sulfurreducens (strain ATCC 51573 / DSM 12127 / PCA).